Reading from the N-terminus, the 163-residue chain is MTTPIIDLQIAAENSENLPSLAQFTQWVQRALAHEAQTEDFPETEITIRIVDEAESYELNLTYRGKDKPTNVLSFPFEVPEGIELPLLGDLIICRQVVEKEAQEQQISLESHWAHLAIHGTLHLLGYDHIEDAEAEEMEGLETEIMQSLGFEDPYISEKVIEE.

Zn(2+) is bound by residues histidine 119, histidine 123, and histidine 129.

Belongs to the endoribonuclease YbeY family. Requires Zn(2+) as cofactor.

The protein localises to the cytoplasm. In terms of biological role, single strand-specific metallo-endoribonuclease involved in late-stage 70S ribosome quality control and in maturation of the 3' terminus of the 16S rRNA. This Actinobacillus pleuropneumoniae serotype 5b (strain L20) protein is Endoribonuclease YbeY.